Reading from the N-terminus, the 636-residue chain is Threonine--tRNA ligase (636 aa).

In terms of domain architecture, TGS spans Met1–Thr63. The segment at Asp244–Pro535 is catalytic. Cys335, His386, and His512 together coordinate Zn(2+).

It belongs to the class-II aminoacyl-tRNA synthetase family. In terms of assembly, homodimer. Zn(2+) serves as cofactor.

Its subcellular location is the cytoplasm. The catalysed reaction is tRNA(Thr) + L-threonine + ATP = L-threonyl-tRNA(Thr) + AMP + diphosphate + H(+). Its function is as follows. Catalyzes the attachment of threonine to tRNA(Thr) in a two-step reaction: L-threonine is first activated by ATP to form Thr-AMP and then transferred to the acceptor end of tRNA(Thr). Also edits incorrectly charged L-seryl-tRNA(Thr). This is Threonine--tRNA ligase from Anaplasma marginale (strain St. Maries).